A 170-amino-acid chain; its full sequence is Adenine phosphoribosyltransferase (170 aa).

Belongs to the purine/pyrimidine phosphoribosyltransferase family. Homodimer.

It is found in the cytoplasm. It catalyses the reaction AMP + diphosphate = 5-phospho-alpha-D-ribose 1-diphosphate + adenine. It functions in the pathway purine metabolism; AMP biosynthesis via salvage pathway; AMP from adenine: step 1/1. In terms of biological role, catalyzes a salvage reaction resulting in the formation of AMP, that is energically less costly than de novo synthesis. The chain is Adenine phosphoribosyltransferase from Symbiobacterium thermophilum (strain DSM 24528 / JCM 14929 / IAM 14863 / T).